A 294-amino-acid chain; its full sequence is tRNA dimethylallyltransferase (294 aa).

Residue 10–17 participates in ATP binding; sequence GPTAVGKT. 12-17 serves as a coordination point for substrate; it reads TAVGKT. The interval 35 to 38 is interaction with substrate tRNA; sequence DSQQ.

Belongs to the IPP transferase family. As to quaternary structure, monomer. Mg(2+) serves as cofactor.

The catalysed reaction is adenosine(37) in tRNA + dimethylallyl diphosphate = N(6)-dimethylallyladenosine(37) in tRNA + diphosphate. In terms of biological role, catalyzes the transfer of a dimethylallyl group onto the adenine at position 37 in tRNAs that read codons beginning with uridine, leading to the formation of N6-(dimethylallyl)adenosine (i(6)A). In Streptococcus suis (strain 05ZYH33), this protein is tRNA dimethylallyltransferase.